A 156-amino-acid polypeptide reads, in one-letter code: Small ribosomal subunit protein uS7 (156 aa).

This sequence belongs to the universal ribosomal protein uS7 family. Part of the 30S ribosomal subunit. Contacts proteins S9 and S11.

In terms of biological role, one of the primary rRNA binding proteins, it binds directly to 16S rRNA where it nucleates assembly of the head domain of the 30S subunit. Is located at the subunit interface close to the decoding center, probably blocks exit of the E-site tRNA. The protein is Small ribosomal subunit protein uS7 of Ralstonia nicotianae (strain ATCC BAA-1114 / GMI1000) (Ralstonia solanacearum).